Here is a 117-residue protein sequence, read N- to C-terminus: UPF0321 protein PJ695.01c (117 aa).

A signal peptide spans 1–17; sequence MLLLLYICCLFLKFILA. N-linked (GlcNAc...) asparagine glycans are attached at residues Asn39, Asn65, Asn71, and Asn104.

It belongs to the UPF0321 family.

The polypeptide is UPF0321 protein PJ695.01c (Schizosaccharomyces pombe (strain 972 / ATCC 24843) (Fission yeast)).